The sequence spans 140 residues: Transcriptional regulator YdaT (140 aa).

Transcriptional regulator that causes a severe detrimental growth effect and reduces cell viability. When expressed, it alters expression of a variety of bacterial regulons normally controlled by the transcriptional regulatory protein RcsA, resulting in deficient lipopolysaccharide biosynthesis and cell division. YdaT has no effect on Rac prophage excision. Overexpression of ydaST reduces growth and leads to loss of cell viability. May contribute to toxicity and morphological defects. The protein is Transcriptional regulator YdaT (ydaT) of Escherichia coli (strain K12).